The following is a 788-amino-acid chain: Bifunctional purine biosynthetic protein ADE1 (788 aa).

Residues 1 to 429 (MSLRILLVGN…NRKDIAYKAF (429 aa)) form a GARS region. In terms of domain architecture, ATP-grasp spans 114-323 (KDFMKKHNIP…LAEVMLACVE (210 aa)). 140-201 (VKKVGHRVVI…EEFLEGDELS (62 aa)) serves as a coordination point for ATP. Glutamate 291 and asparagine 293 together coordinate Mg(2+). The segment at 439-752 (ITYAQAGVSI…VVKQEKVAEV (314 aa)) is AIRS.

The protein in the N-terminal section; belongs to the GARS family. This sequence in the C-terminal section; belongs to the AIR synthase family. It depends on Mg(2+) as a cofactor. Mn(2+) serves as cofactor.

The protein localises to the cytoplasm. Its subcellular location is the cytosol. The enzyme catalyses 5-phospho-beta-D-ribosylamine + glycine + ATP = N(1)-(5-phospho-beta-D-ribosyl)glycinamide + ADP + phosphate + H(+). It catalyses the reaction 2-formamido-N(1)-(5-O-phospho-beta-D-ribosyl)acetamidine + ATP = 5-amino-1-(5-phospho-beta-D-ribosyl)imidazole + ADP + phosphate + H(+). Its pathway is purine metabolism; IMP biosynthesis via de novo pathway; 5-amino-1-(5-phospho-D-ribosyl)imidazole from N(2)-formyl-N(1)-(5-phospho-D-ribosyl)glycinamide: step 2/2. The protein operates within purine metabolism; IMP biosynthesis via de novo pathway; N(1)-(5-phospho-D-ribosyl)glycinamide from 5-phospho-alpha-D-ribose 1-diphosphate: step 2/2. Catalyzes the second and fifth step in the 'de novo' purine biosynthesis pathway; contains phosphoribosylamine--glycine ligase (GARS) and phosphoribosylformylglycinamidine cyclo-ligase (AIRS) activities. This Yarrowia lipolytica (strain CLIB 122 / E 150) (Yeast) protein is Bifunctional purine biosynthetic protein ADE1.